Consider the following 591-residue polypeptide: Coiled-coil domain-containing protein 148 (591 aa).

Coiled-coil stretches lie at residues valine 166–isoleucine 195, methionine 352–lysine 417, and glutamate 466–alanine 498.

The protein is Coiled-coil domain-containing protein 148 (CCDC148) of Homo sapiens (Human).